The primary structure comprises 714 residues: Protein spire homolog 2 (714 aa).

In terms of domain architecture, KIND spans L22–L203. The interval D136 to P162 is disordered. WH2 domains lie at Q248 to V262, P278 to V296, and L342 to V359. A phosphoserine mark is found at S371, S440, S442, and S476. Residues V453–M516 form a disordered region. The segment covering D486 to D496 has biased composition (polar residues). The interval L534 to E554 is spir-box.

The protein belongs to the spire family.

The protein resides in the cytoplasm. The protein localises to the cytoskeleton. It is found in the cytosol. Its subcellular location is the cell membrane. It localises to the cytoplasmic vesicle membrane. Its function is as follows. Acts as an actin nucleation factor, remains associated with the slow-growing pointed end of the new filament. Involved in intracellular vesicle transport along actin fibers, providing a novel link between actin cytoskeleton dynamics and intracellular transport. Required for asymmetric spindle positioning and asymmetric cell division during meiosis. Required for normal formation of the cleavage furrow and for polar body extrusion during female germ cell meiosis. Also acts in the nucleus: together with SPIRE1 and SPIRE2, promotes assembly of nuclear actin filaments in response to DNA damage in order to facilitate movement of chromatin and repair factors after DNA damage. The polypeptide is Protein spire homolog 2 (SPIRE2) (Homo sapiens (Human)).